The following is a 200-amino-acid chain: Systemin (200 aa).

The segment at 1–33 is disordered; that stretch reads MGTPSYDIKNKGDDMQEEPKVKLHHEKGGDEKE. Propeptides lie at residues 1-178 and 197-200; these read MGTP…REDL and NNKL. A 1; truncated repeat occupies 3 to 8; that stretch reads TPSYDI. Positions 8–33 are enriched in basic and acidic residues; the sequence is IKNKGDDMQEEPKVKLHHEKGGDEKE. 4 tandem repeats follow at residues 37-45, 80-88, 117-125, and 145-153. Disordered stretches follow at residues 106-159 and 178-200; these read EEEE…MEGE and LAVQ…NNKL. Composition is skewed to basic and acidic residues over residues 111-140 and 146-158; these read EKEK…KVEH and KETP…KMEG.

All organs except the roots. Transported out of wounds to distal tissues.

It localises to the cytoplasm. In terms of biological role, activates a lipid-based signal transduction pathway in which linolenic acid is converted to jasmonic acid, a potent activator of defense gene transcription, including proteinase inhibitor. In Solanum lycopersicum (Tomato), this protein is Systemin.